The sequence spans 1649 residues: Cortactin-binding protein 2 (1649 aa).

The tract at residues 1–27 (MATDSASCEPDLSRAPGDAEGATAEAA) is disordered. Residues 15 to 25 (APGDAEGATAE) show a composition bias toward low complexity. Residues 118–275 (RKMQERMSAQ…EQMKKGNDGK (158 aa)) are a coiled coil. Disordered stretches follow at residues 322–439 (PLSV…PGLN), 451–476 (GNAN…PTSR), and 492–604 (ALSR…LPPK). A compositionally biased stretch (polar residues) spans 330 to 342 (STGSPLVSTNTKG). Residues 395–416 (STPSTPSGTAPAAAQTLGAAPQ) are compositionally biased toward low complexity. Positions 492–503 (ALSRFTSPQAGA) are enriched in polar residues. Arg-495 bears the Asymmetric dimethylarginine mark. ANK repeat units follow at residues 699–729 (GRPT…DINY), 733–762 (DSHS…RVDA), 766–795 (NGFT…NINH), 799–828 (GGQT…DRSI), 832–861 (DGWT…PAPG), and 901–931 (EGWT…EPER). The disordered stretch occupies residues 1438-1471 (SAAWRKVNTSPRKKPGHFSSPMWNKPDLKHEGMR). Ser-1510 is modified (phosphoserine). Positions 1527 to 1649 (KSESDISKIA…KHEHVEKRNK (123 aa)) are disordered. Residues 1528–1546 (SESDISKIADSREDLRTFD) show a composition bias toward basic and acidic residues. Polar residues-rich tracts occupy residues 1547–1557 (SSRTNPVTSAP), 1571–1584 (PLSS…SNSK), and 1621–1630 (NTRQLEINNN). Residues 1631–1649 (SKEENWNVDKHEHVEKRNK) are compositionally biased toward basic and acidic residues.

In terms of assembly, interacts with CTTN/cortactin SH3 domain. Interacts with STRN, STRN4/zinedin and MOB4/phocein; this interactions mediate the association with the STRIPAK core complex and may regulate dendritic spine distribution of the STRIPAK complex in hippocampal neurons. Activation of glutamate receptors weakens the interaction with STRN and STRN4.

It is found in the cytoplasm. Its subcellular location is the cell cortex. It localises to the cell projection. The protein localises to the dendritic spine. In terms of biological role, regulates the dendritic spine distribution of CTTN/cortactin in hippocampal neurons, and thus controls dendritic spinogenesis and dendritic spine maintenance. Associates with the striatin-interacting phosphatase and kinase (STRIPAK) core complex to regulate dendritic spine distribution of the STRIPAK complex in hippocampal neurons. The polypeptide is Cortactin-binding protein 2 (Cttnbp2) (Rattus norvegicus (Rat)).